The primary structure comprises 328 residues: Gonadotropin-releasing hormone receptor (328 aa).

Residues methionine 1–arginine 38 lie on the Extracellular side of the membrane. The N-linked (GlcNAc...) asparagine glycan is linked to asparagine 18. Residues valine 39–lysine 59 form a helical membrane-spanning segment. The Cytoplasmic segment spans residues leucine 60–threonine 84. The chain crosses the membrane as a helical span at residues leucine 85 to valine 105. At glutamine 106–lysine 115 the chain is on the extracellular side. Cysteine 114 and cysteine 196 are oxidised to a cystine. Residues isoleucine 116 to serine 136 traverse the membrane as a helical segment. The Cytoplasmic segment spans residues leucine 137–threonine 160. Residues glycine 161–isoleucine 181 traverse the membrane as a helical segment. Residues histidine 182–glutamine 208 lie on the Extracellular side of the membrane. Residues alanine 209 to isoleucine 229 traverse the membrane as a helical segment. Topologically, residues cysteine 230 to alanine 271 are cytoplasmic. A helical transmembrane segment spans residues phenylalanine 272 to phenylalanine 292. Residues aspartate 293 to histidine 306 lie on the Extracellular side of the membrane. A helical membrane pass occupies residues phenylalanine 307–serine 327. Residue leucine 328 is a topological domain, cytoplasmic.

It belongs to the G-protein coupled receptor 1 family.

The protein resides in the cell membrane. In terms of biological role, receptor for gonadotropin releasing hormone (GnRH) that mediates the action of GnRH to stimulate the secretion of the gonadotropic hormones luteinizing hormone (LH) and follicle-stimulating hormone (FSH). This receptor mediates its action by association with G-proteins that activate a phosphatidylinositol-calcium second messenger system. The chain is Gonadotropin-releasing hormone receptor (GNRHR) from Cavia porcellus (Guinea pig).